Here is a 370-residue protein sequence, read N- to C-terminus: D-alanine--D-alanine ligase (370 aa).

Residues 142–348 (KQILTHHHIQ…YTALIDQLIQ (207 aa)) enclose the ATP-grasp domain. 172–227 (QAHVGDHLFIKPANQGSSIGIHKAENEQEYLDGLADAFKYDYKILVEESIDNPREV) serves as a coordination point for ATP. Mg(2+) contacts are provided by Asp-302, Glu-315, and Asn-317.

Belongs to the D-alanine--D-alanine ligase family. Mg(2+) is required as a cofactor. The cofactor is Mn(2+).

The protein resides in the cytoplasm. It carries out the reaction 2 D-alanine + ATP = D-alanyl-D-alanine + ADP + phosphate + H(+). Its pathway is cell wall biogenesis; peptidoglycan biosynthesis. Its function is as follows. Cell wall formation. The sequence is that of D-alanine--D-alanine ligase from Lactiplantibacillus plantarum (strain ATCC BAA-793 / NCIMB 8826 / WCFS1) (Lactobacillus plantarum).